A 480-amino-acid polypeptide reads, in one-letter code: MAGFAEIGLSSWLVEQCRQLGLKQPTPVQLGCIPAILEGRDCLGCAKTGSGKTAAFVLPILQKLSEDPYGIFCLVLTPTRELAYQIAEQFRVLGKPLGLKDCIIVGGMDMVAQALELSRKPHVVIATPGRLADHLRSSNTFNMKKIQFLVMDEADRLLEQGCTDFTTDLETILAAVPARRQTLLFSATLTDTLKELQGLATNEPFFWEAQATVRTVEQLDQRYLLVPEKVKDAYLVHLVQTFQDQLEDCSIIIFTNTCKTCQILCMMLRKFNFPTVALHSMMKQKERFAALAKFKSSIYRILIATDVASRGLDIPTVQVVINHNTPGLPKIYIHRVGRTARAGRQGQAITLVTQYDIHLLHAIEEQIKQQLAELVVEEAEVLQILTQVNVVRRECEIKLEASHFDEKKEINKRKQMILEGKDPDLEAKRKAELAKIKQQNRRFKEKVGQTLRRQKAGSTVRRSRPPRSRPQEPAQAEAQD.

The Q motif signature appears at 2–30 (AGFAEIGLSSWLVEQCRQLGLKQPTPVQL). The Helicase ATP-binding domain occupies 33–207 (IPAILEGRDC…GLATNEPFFW (175 aa)). 46–53 (AKTGSGKT) lines the ATP pocket. A DEAD box motif is present at residues 152–155 (DEAD). In terms of domain architecture, Helicase C-terminal spans 218–382 (QLDQRYLLVP…ELVVEEAEVL (165 aa)). The segment at 438-480 (QQNRRFKEKVGQTLRRQKAGSTVRRSRPPRSRPQEPAQAEAQD) is disordered.

Belongs to the DEAD box helicase family. DDX49/DBP8 subfamily.

The protein localises to the nucleus. The protein resides in the nucleolus. It catalyses the reaction ATP + H2O = ADP + phosphate + H(+). Functionally, ATP-dependent RNA helicase that plays a role in various aspects of RNA metabolism including the regulation of mRNA export and the levels of pre-ribosomal RNA. Regulates the stability and synthesis of pre-ribosomal RNA and thereby regulates cell proliferation. Also possesses antiviral activity by recognizing gammaherpesvirus transcripts in the context of lytic reactivation. This chain is Probable ATP-dependent RNA helicase DDX49 (Ddx49), found in Mus musculus (Mouse).